A 117-amino-acid chain; its full sequence is Large ribosomal subunit protein bL19 (117 aa).

Belongs to the bacterial ribosomal protein bL19 family.

Functionally, this protein is located at the 30S-50S ribosomal subunit interface and may play a role in the structure and function of the aminoacyl-tRNA binding site. The protein is Large ribosomal subunit protein bL19 of Bacteroides thetaiotaomicron (strain ATCC 29148 / DSM 2079 / JCM 5827 / CCUG 10774 / NCTC 10582 / VPI-5482 / E50).